Consider the following 180-residue polypeptide: Large ribosomal subunit protein uL10 (180 aa).

It belongs to the universal ribosomal protein uL10 family. As to quaternary structure, part of the ribosomal stalk of the 50S ribosomal subunit. The N-terminus interacts with L11 and the large rRNA to form the base of the stalk. The C-terminus forms an elongated spine to which L12 dimers bind in a sequential fashion forming a multimeric L10(L12)X complex.

Forms part of the ribosomal stalk, playing a central role in the interaction of the ribosome with GTP-bound translation factors. The polypeptide is Large ribosomal subunit protein uL10 (rplJ) (Treponema pallidum (strain Nichols)).